A 73-amino-acid chain; its full sequence is Translation initiation factor IF-1 (73 aa).

Residues 1–73 (MAKKEGALEL…TRGRIVYRHK (73 aa)) form the S1-like domain.

The protein belongs to the IF-1 family. Component of the 30S ribosomal translation pre-initiation complex which assembles on the 30S ribosome in the order IF-2 and IF-3, IF-1 and N-formylmethionyl-tRNA(fMet); mRNA recruitment can occur at any time during PIC assembly.

The protein localises to the cytoplasm. In terms of biological role, one of the essential components for the initiation of protein synthesis. Stabilizes the binding of IF-2 and IF-3 on the 30S subunit to which N-formylmethionyl-tRNA(fMet) subsequently binds. Helps modulate mRNA selection, yielding the 30S pre-initiation complex (PIC). Upon addition of the 50S ribosomal subunit IF-1, IF-2 and IF-3 are released leaving the mature 70S translation initiation complex. In Cutibacterium acnes (strain DSM 16379 / KPA171202) (Propionibacterium acnes), this protein is Translation initiation factor IF-1.